Here is a 66-residue protein sequence, read N- to C-terminus: Alpha-bisabolene synthase (66 aa).

This sequence belongs to the terpene synthase family. Tpsd subfamily. It depends on Mn(2+) as a cofactor. The cofactor is K(+).

It localises to the cytoplasm. The enzyme catalyses (2E,6E)-farnesyl diphosphate = (E,R)-alpha-bisabolene + diphosphate. It participates in terpene metabolism; oleoresin biosynthesis. Involved in defensive oleoresin formation in conifers in response to insect attack or other injury. Involved in sesquiterpene (C15) olefins biosynthesis. This Pseudotsuga menziesii (Douglas-fir) protein is Alpha-bisabolene synthase.